The sequence spans 290 residues: Translin-associated protein X (290 aa).

Residues 1–32 (MSNKEGSGGFRKRKHDNFPHNQRREGKDVNSS) form a disordered region. Positions 16–28 (DNFPHNQRREGKD) are enriched in basic and acidic residues. The interval 73–208 (LLHRITSAPD…MRMCINSVGN (136 aa)) is interaction with C1D. Residues Glu129 and Glu197 each contribute to the Mg(2+) site. Residue Lys279 forms a Glycyl lysine isopeptide (Lys-Gly) (interchain with G-Cter in SUMO2) linkage.

It belongs to the translin family. As to quaternary structure, ring-shaped heterooctamer of six TSN and two TSNAX subunits. Interacts with GOLGA3, TSNAXIP1, SUN1 and AKAP9. Interacts with the homodimeric form of C1D following gamma-radiation. Interacts with TSN and C1D in a mutually exclusive manner. Sumoylated with SUMO1.

It is found in the cytoplasm. The protein resides in the perinuclear region. Its subcellular location is the golgi apparatus. It localises to the nucleus. In terms of biological role, acts in combination with TSN as an endonuclease involved in the activation of the RNA-induced silencing complex (RISC). Possible role in spermatogenesis. The chain is Translin-associated protein X (TSNAX) from Pongo abelii (Sumatran orangutan).